The following is a 66-amino-acid chain: Large ribosomal subunit protein bL33c (66 aa).

This sequence belongs to the bacterial ribosomal protein bL33 family.

The protein resides in the plastid. It is found in the chloroplast. The polypeptide is Large ribosomal subunit protein bL33c (Agrostis stolonifera (Creeping bentgrass)).